A 1131-amino-acid polypeptide reads, in one-letter code: Translation initiation factor IF-2 (1131 aa).

The segment at 49-542 (KFKGSVSSNE…AFIMPKPQQS (494 aa)) is disordered. Over residues 60 to 75 (KSIDNGKASRVEKPEK) the composition is skewed to basic and acidic residues. Polar residues-rich tracts occupy residues 76–88 (NNSV…QTPS) and 108–125 (SEQN…NIQS). Residues 127–138 (GDRKYQHTDRRP) are compositionally biased toward basic and acidic residues. Positions 139-152 (QGNNGEGPQTSTNS) are enriched in polar residues. Basic and acidic residues-rich tracts occupy residues 164–180 (GDRR…RPYN) and 223–239 (GDRR…RPYN). Positions 411–436 (GQGGYGGRPQGQGSYGGRPQGQGGYA) are enriched in gly residues. Basic and acidic residues-rich tracts occupy residues 450-479 (KDFD…KSSI) and 487-530 (LTKE…DPNR). Positions 632-801 (KRPPVVCVMG…ILTAEMGELK (170 aa)) constitute a tr-type G domain. The G1 stretch occupies residues 641–648 (GHVDHGKT). 641–648 (GHVDHGKT) contacts GTP. Positions 666-670 (GITQH) are G2. The G3 stretch occupies residues 687–690 (DTPG). Residues 687–691 (DTPGH) and 741–744 (NKID) each bind GTP. Residues 741 to 744 (NKID) are G4. A G5 region spans residues 777–779 (SAH).

Belongs to the TRAFAC class translation factor GTPase superfamily. Classic translation factor GTPase family. IF-2 subfamily.

It is found in the cytoplasm. In terms of biological role, one of the essential components for the initiation of protein synthesis. Protects formylmethionyl-tRNA from spontaneous hydrolysis and promotes its binding to the 30S ribosomal subunits. Also involved in the hydrolysis of GTP during the formation of the 70S ribosomal complex. The chain is Translation initiation factor IF-2 from Lachnoclostridium phytofermentans (strain ATCC 700394 / DSM 18823 / ISDg) (Clostridium phytofermentans).